Here is a 203-residue protein sequence, read N- to C-terminus: Twist-related protein 1 (203 aa).

Over residues M1–S18 the composition is skewed to low complexity. Residues M1–E105 are disordered. Over residues R34–R43 the composition is skewed to basic residues. Composition is skewed to gly residues over residues A46–E65 and G80–S100. The region spanning T109–L160 is the bHLH domain. A sufficient for transactivation activity region spans residues Q162 to R192.

Efficient DNA binding requires dimerization with another bHLH protein. Homodimer or heterodimer with E proteins such as TCF3. ID1 binds preferentially to TCF3 but does not interact efficiently with TWIST1 so ID1 levels control the amount of TCF3 available to dimerize with TWIST and thus determine the type of dimer formed.

It localises to the nucleus. Its function is as follows. Acts as a transcriptional regulator. Inhibits myogenesis by sequestrating E proteins, inhibiting trans-activation by MEF2, and inhibiting DNA-binding by MYOD1 through physical interaction. This interaction probably involves the basic domains of both proteins. Also represses expression of pro-inflammatory cytokines such as TNFA and IL1B. Regulates cranial suture patterning and fusion. Activates transcription as a heterodimer with E proteins. Regulates gene expression differentially, depending on dimer composition. Homodimers induce expression of FGFR2 and POSTN while heterodimers repress FGFR2 and POSTN expression and induce THBS1 expression. Heterodimerization is also required for osteoblast differentiation. Represses the activity of the circadian transcriptional activator: NPAS2-BMAL1 heterodimer. This Callithrix jacchus (White-tufted-ear marmoset) protein is Twist-related protein 1 (TWIST1).